The primary structure comprises 547 residues: CAP-Gly domain-containing linker protein 3 (547 aa).

The segment at 1-49 is disordered; it reads MTKTDPAPMAPPPRGEEEEEEEEDEPVPEAPSPTQERRQKPVVHPSAPA. The segment covering 16–27 has biased composition (acidic residues); it reads EEEEEEEEDEPV. ANK repeat units follow at residues 117–158, 160–191, and 197–229; these read TDMT…LRSR, TNMN…VVNS, and NHGS…LRNR. The 43-residue stretch at 314–356 folds into the CAP-Gly 1 domain; that stretch reads GTTEFASGQWVGVELDEPEGKNDGSVGGVRYFICPPKQGLFAS. A disordered region spans residues 365 to 413; sequence DAPPSSVTSTPRTPRMDFSRVTGKGRREHKGKKKSPSSPSLGSLQQREG. A compositionally biased stretch (low complexity) spans 367 to 377; the sequence is PPSSVTSTPRT. A Phosphothreonine modification is found at threonine 374. Positions 387 to 399 are enriched in basic residues; the sequence is GKGRREHKGKKKS. Phosphoserine is present on residues serine 399 and serine 401. The 43-residue stretch at 436–478 folds into the CAP-Gly 2 domain; that stretch reads GKTDFAPGYWYGIELDQPTGKHDGSVFGVRYFTCAPRHGVFAP. The tract at residues 488-547 is goLD; sequence STDPPGDSVGAKKVHQVTMTQPKRTFTTVRTPKDIASENSISRLLFCCWFPWMLRAEMQS. 2 S-palmitoyl cysteine lipidation sites follow: cysteine 534 and cysteine 535.

As to quaternary structure, homodimer. Interacts with AKT1 and AKT2; when AKT1 and AKT2 are phosphorylated and activated, affinity is higher for AKT2. Interacts with ZDHHC13 (via ANK repeats). Interacts with ZDHHC17 (via ANK repeats). In terms of processing, palmitoylation by ZDHHC17 regulates association with the plasma membrane.

It localises to the cell membrane. The protein localises to the cytoplasm. The protein resides in the golgi apparatus. It is found in the golgi stack. Its function is as follows. Functions as a cytoplasmic linker protein. Involved in TGN-endosome dynamics. May modulate the cellular compartmentalization of AKT kinase family and promote its cell membrane localization, thereby playing a role in glucose transport in adipocytes. This chain is CAP-Gly domain-containing linker protein 3 (Clip3), found in Mus musculus (Mouse).